Here is a 772-residue protein sequence, read N- to C-terminus: MGWLRGIALLSLGVLLAGRVNCQHVKNNVPRLKLSYKEMLESNNIVNFNGLANSSSYHTFLLDEERSRLYVGAKDHIFSFNLVNIKEYQKIVWPVSHSRRDECKWAGKDILRECANFIKVLKTYNQTHLYACGTGAFHPMCTYIEVGSHPEDNIFRMEDSHFENGRGKSPYDPKLLTASLLVDGELYSGTAADFMGRDFAIFRTLGHHHPIRTEQHDSRWLNDPRFISAHLIPESDNPEDDKIYFFFRENAIDGEHTGKATHARIGQICKNDFGGHRSLVNKWTTFLKARLICSVPGPNGIDTHFDELQDVFLMNSKDPKNPIVYGVFTTSSNIFKGSAVCMYSMTDVRRVFLGPYAHRDGPNYQWVPYQGRVPYPRPGTCPSKTFGGFDSTKDLPDEVITFARSHPAMYNPVFPINSRPIMIKTDVDYQFTQIVVDRVDAEDGQYDVMFIGTDIGTVLKVVSIPKETWHELEEVLLEEMTVFREPTVISAMKISTKQQQLYIGSATGVSQLPLHRCDVYGKACAECCLARDPYCAWDGSSCSRYFPTAKRRTRRQDIRNGDPLTHCSDLQHHDNPSGQTLEEKIIYGVENSSTFLECSPKSQRAIVYWQFQKQNDDHKVEIKVDDRMIRTEQGLLLRSLQRRDSGIYFCHAVEHGFIQTLLKVTLEVIDTDHLEELLHKEEDADASKTKDATNSMTPSQKIWYRDFMQLINHPNLNTMDEFCEQVWKRDRKQRRQRPANAQVNTNKWKHLQENKKGRNRRTHEFERAPRSV.

Positions 1–22 (MGWLRGIALLSLGVLLAGRVNC) are cleaved as a signal peptide. Positions 31-514 (RLKLSYKEML…SATGVSQLPL (484 aa)) constitute a Sema domain. An N-linked (GlcNAc...) asparagine glycan is attached at N53. The cysteines at positions 103 and 114 are disulfide-linked. N-linked (GlcNAc...) asparagine glycosylation is present at N125. Disulfide bonds link C132–C141, C269–C381, C293–C341, and C517–C535. The region spanning 576 to 665 (PSGQTLEEKI…GFIQTLLKVT (90 aa)) is the Ig-like C2-type domain. N591 carries an N-linked (GlcNAc...) asparagine glycan. Residues C650 and C723 are joined by a disulfide bond. Positions 730-772 (DRKQRRQRPANAQVNTNKWKHLQENKKGRNRRTHEFERAPRSV) are disordered. Residues 750 to 772 (HLQENKKGRNRRTHEFERAPRSV) are compositionally biased toward basic and acidic residues.

Belongs to the semaphorin family. In terms of tissue distribution, expressed at relatively high levels in brain and muscle, moderate levels in lung, bursa, and heart and virtually absent in liver. Collapsin-1, -2, -3, and -5 bind to overlapping but distinct axon tracts.

The protein localises to the secreted. Induces the collapse and paralysis of neuronal growth cones. Could serve as a ligand that guides specific growth cones by a motility-inhibiting mechanism. Binds to neuropilin. This Gallus gallus (Chicken) protein is Semaphorin-3A (SEMA3A).